A 517-amino-acid polypeptide reads, in one-letter code: Retrotransposon-like protein 1 (517 aa).

Disordered stretches follow at residues 1–29 (MEVN…QQQL) and 142–161 (EEER…DARS).

In Caenorhabditis elegans, this protein is Retrotransposon-like protein 1 (retr-1).